Here is a 322-residue protein sequence, read N- to C-terminus: Putative MgpC-like protein MPN_367 (322 aa).

A compositionally biased stretch (low complexity) spans 1–48 (MVGSGAAGSASSLQGNGSNSSGLKSLLRSAPVSVPPSSTSNQTLSLSN). 2 disordered regions span residues 1–59 (MVGS…AVVS) and 118–145 (DATS…EPAL). Residues 120–134 (TSTNLPHAAGASQTG) are compositionally biased toward polar residues.

It belongs to the MgpC family.

This Mycoplasma pneumoniae (strain ATCC 29342 / M129 / Subtype 1) (Mycoplasmoides pneumoniae) protein is Putative MgpC-like protein MPN_367.